Here is an 83-residue protein sequence, read N- to C-terminus: Cytochrome b559 subunit alpha (83 aa).

The helical transmembrane segment at 21–35 (VIHSITVPSLFIAGW) threads the bilayer. Heme is bound at residue histidine 23.

The protein belongs to the PsbE/PsbF family. In terms of assembly, heterodimer of an alpha subunit and a beta subunit. PSII is composed of 1 copy each of membrane proteins PsbA, PsbB, PsbC, PsbD, PsbE, PsbF, PsbH, PsbI, PsbJ, PsbK, PsbL, PsbM, PsbT, PsbX, PsbY, PsbZ, Psb30/Ycf12, at least 3 peripheral proteins of the oxygen-evolving complex and a large number of cofactors. It forms dimeric complexes. Requires heme b as cofactor.

It localises to the plastid. The protein resides in the chloroplast thylakoid membrane. Functionally, this b-type cytochrome is tightly associated with the reaction center of photosystem II (PSII). PSII is a light-driven water:plastoquinone oxidoreductase that uses light energy to abstract electrons from H(2)O, generating O(2) and a proton gradient subsequently used for ATP formation. It consists of a core antenna complex that captures photons, and an electron transfer chain that converts photonic excitation into a charge separation. The protein is Cytochrome b559 subunit alpha of Oltmannsiellopsis viridis (Marine flagellate).